Consider the following 344-residue polypeptide: UDP-3-O-acylglucosamine N-acyltransferase (344 aa).

Catalysis depends on His236, which acts as the Proton acceptor.

Belongs to the transferase hexapeptide repeat family. LpxD subfamily. Homotrimer.

It carries out the reaction a UDP-3-O-[(3R)-3-hydroxyacyl]-alpha-D-glucosamine + a (3R)-hydroxyacyl-[ACP] = a UDP-2-N,3-O-bis[(3R)-3-hydroxyacyl]-alpha-D-glucosamine + holo-[ACP] + H(+). It functions in the pathway bacterial outer membrane biogenesis; LPS lipid A biosynthesis. In terms of biological role, catalyzes the N-acylation of UDP-3-O-acylglucosamine using 3-hydroxyacyl-ACP as the acyl donor. Is involved in the biosynthesis of lipid A, a phosphorylated glycolipid that anchors the lipopolysaccharide to the outer membrane of the cell. The protein is UDP-3-O-acylglucosamine N-acyltransferase of Nitratidesulfovibrio vulgaris (strain ATCC 29579 / DSM 644 / CCUG 34227 / NCIMB 8303 / VKM B-1760 / Hildenborough) (Desulfovibrio vulgaris).